The following is a 235-amino-acid chain: Interleukin-34 (235 aa).

Residues 1–20 (MPWGLAWLYCLGILLDVALG) form the signal peptide. The N-linked (GlcNAc...) asparagine glycan is linked to N100.

This sequence belongs to the IL-34 family. Homodimer. Interacts with CSF1R.

The protein localises to the secreted. In terms of biological role, cytokine that promotes the proliferation, survival and differentiation of monocytes and macrophages. Promotes the release of pro-inflammatory chemokines, and thereby plays an important role in innate immunity and in inflammatory processes. Plays an important role in the regulation of osteoclast proliferation and differentiation, and in the regulation of bone resorption. Signaling via CSF1R and its downstream effectors stimulates phosphorylation of MAPK1/ERK2 AND MAPK3/ERK1. This chain is Interleukin-34 (Il34), found in Mus musculus (Mouse).